The sequence spans 345 residues: MTDKTSLSYKDAGVDIDAGNALVGRIKGVVKKTRRPEVMGGLGGFGALCALPQKYREPVLVSGTDGVGTKLRLAMDLKRHDTIGIDLVAMCVNDLVVQGAEPLFFLDYYATGKLDVDTASAVISGIAEGCLQSGCSLVGGETAEMPGMYHGEDYDVAGFCVGVVEKSEIIDGSKVSDGDVLIALGSSGPHSNGYSLVRKILEVSGCDPQTTELDGKPLADHLLAPTRIYVKSVLELIEKVDVHAIAHLTGGGFWENIPRVLPDNTQAVIDESSWQWPEVFNWLQTAGNVEHHEMYRTFNCGVGMIIALPAPEVDKALALLNANGENAWKIGIIKASDSEQRVVIE.

This sequence belongs to the AIR synthase family.

It localises to the cytoplasm. It carries out the reaction 2-formamido-N(1)-(5-O-phospho-beta-D-ribosyl)acetamidine + ATP = 5-amino-1-(5-phospho-beta-D-ribosyl)imidazole + ADP + phosphate + H(+). The protein operates within purine metabolism; IMP biosynthesis via de novo pathway; 5-amino-1-(5-phospho-D-ribosyl)imidazole from N(2)-formyl-N(1)-(5-phospho-D-ribosyl)glycinamide: step 2/2. This Escherichia coli (strain K12 / MC4100 / BW2952) protein is Phosphoribosylformylglycinamidine cyclo-ligase.